A 198-amino-acid polypeptide reads, in one-letter code: MYVRIVQDLIRELGKLPGIGPKSAQRITFFILQNPSFDIDRLSETLQSVRKQVQFCKVCGNFSEEDECVICSDPRRDRGVICVVEEPKDVVAIEKTREFSGLYHVLGGAISPIDGVGPDDLNIRQLLQRLADGTITEVVLATDPNMEGEATASYIARVISAMRIRVSKLASGLPVGSDLEYADEITLGRALEGRQYIN.

The C4-type zinc-finger motif lies at 56 to 71 (CKVCGNFSEEDECVIC). The 96-residue stretch at 79–174 (GVICVVEEPK…RVSKLASGLP (96 aa)) folds into the Toprim domain.

This sequence belongs to the RecR family.

May play a role in DNA repair. It seems to be involved in an RecBC-independent recombinational process of DNA repair. It may act with RecF and RecO. In Tropheryma whipplei (strain Twist) (Whipple's bacillus), this protein is Recombination protein RecR.